Reading from the N-terminus, the 366-residue chain is Putative RING-H2 finger protein ATL21C (366 aa).

Residues methionine 1–alanine 23 form the signal peptide. Residues leucine 243–isoleucine 263 traverse the membrane as a helical segment. The segment at cysteine 320–arginine 362 adopts an RING-type; atypical zinc-finger fold.

It belongs to the RING-type zinc finger family. ATL subfamily.

The protein resides in the membrane. It catalyses the reaction S-ubiquitinyl-[E2 ubiquitin-conjugating enzyme]-L-cysteine + [acceptor protein]-L-lysine = [E2 ubiquitin-conjugating enzyme]-L-cysteine + N(6)-ubiquitinyl-[acceptor protein]-L-lysine.. Its pathway is protein modification; protein ubiquitination. This is Putative RING-H2 finger protein ATL21C (ATL21C) from Arabidopsis thaliana (Mouse-ear cress).